The following is a 61-amino-acid chain: Small ribosomal subunit protein uS14 (61 aa).

Residues Cys24, Cys27, Cys40, and Cys43 each coordinate Zn(2+).

It belongs to the universal ribosomal protein uS14 family. Zinc-binding uS14 subfamily. In terms of assembly, part of the 30S ribosomal subunit. Contacts proteins S3 and S10. Zn(2+) is required as a cofactor.

Binds 16S rRNA, required for the assembly of 30S particles and may also be responsible for determining the conformation of the 16S rRNA at the A site. This is Small ribosomal subunit protein uS14 from Natranaerobius thermophilus (strain ATCC BAA-1301 / DSM 18059 / JW/NM-WN-LF).